Here is a 71-residue protein sequence, read N- to C-terminus: uncharacterized protein (71 aa).

An N-terminal signal peptide occupies residues 1–23 (MTLLIILILKYLLCLENLKNISL). 4 N-linked (GlcNAc...) asparagine glycosylation sites follow: asparagine 20, asparagine 28, asparagine 44, and asparagine 50.

It is found in the secreted. This is an uncharacterized protein from Dictyostelium discoideum (Social amoeba).